A 284-amino-acid chain; its full sequence is 4-hydroxy-3-methylbut-2-enyl diphosphate reductase (284 aa).

Cys12 lines the [4Fe-4S] cluster pocket. Residues His40 and His72 each coordinate (2E)-4-hydroxy-3-methylbut-2-enyl diphosphate. Residues His40 and His72 each coordinate dimethylallyl diphosphate. Isopentenyl diphosphate contacts are provided by His40 and His72. Cys94 lines the [4Fe-4S] cluster pocket. His122 is a (2E)-4-hydroxy-3-methylbut-2-enyl diphosphate binding site. His122 lines the dimethylallyl diphosphate pocket. His122 is an isopentenyl diphosphate binding site. Catalysis depends on Glu124, which acts as the Proton donor. (2E)-4-hydroxy-3-methylbut-2-enyl diphosphate is bound at residue Thr161. Cys193 lines the [4Fe-4S] cluster pocket. (2E)-4-hydroxy-3-methylbut-2-enyl diphosphate contacts are provided by Ser221, Asn223, and Ser264. Dimethylallyl diphosphate contacts are provided by Ser221, Asn223, and Ser264. Isopentenyl diphosphate is bound by residues Ser221, Asn223, and Ser264.

Belongs to the IspH family. The cofactor is [4Fe-4S] cluster.

The enzyme catalyses isopentenyl diphosphate + 2 oxidized [2Fe-2S]-[ferredoxin] + H2O = (2E)-4-hydroxy-3-methylbut-2-enyl diphosphate + 2 reduced [2Fe-2S]-[ferredoxin] + 2 H(+). The catalysed reaction is dimethylallyl diphosphate + 2 oxidized [2Fe-2S]-[ferredoxin] + H2O = (2E)-4-hydroxy-3-methylbut-2-enyl diphosphate + 2 reduced [2Fe-2S]-[ferredoxin] + 2 H(+). Its pathway is isoprenoid biosynthesis; dimethylallyl diphosphate biosynthesis; dimethylallyl diphosphate from (2E)-4-hydroxy-3-methylbutenyl diphosphate: step 1/1. It participates in isoprenoid biosynthesis; isopentenyl diphosphate biosynthesis via DXP pathway; isopentenyl diphosphate from 1-deoxy-D-xylulose 5-phosphate: step 6/6. Catalyzes the conversion of 1-hydroxy-2-methyl-2-(E)-butenyl 4-diphosphate (HMBPP) into a mixture of isopentenyl diphosphate (IPP) and dimethylallyl diphosphate (DMAPP). Acts in the terminal step of the DOXP/MEP pathway for isoprenoid precursor biosynthesis. The sequence is that of 4-hydroxy-3-methylbut-2-enyl diphosphate reductase from Dehalococcoides mccartyi (strain ATCC BAA-2100 / JCM 16839 / KCTC 5957 / BAV1).